The primary structure comprises 87 residues: Small ribosomal subunit protein bS20 (87 aa).

Residues M1–A11 are compositionally biased toward basic residues. The tract at residues M1–S26 is disordered.

It belongs to the bacterial ribosomal protein bS20 family.

In terms of biological role, binds directly to 16S ribosomal RNA. This Actinobacillus pleuropneumoniae serotype 5b (strain L20) protein is Small ribosomal subunit protein bS20.